The primary structure comprises 215 residues: Cytidylate kinase (215 aa).

Residue 10–18 coordinates ATP; that stretch reads GPAASGKGT.

This sequence belongs to the cytidylate kinase family. Type 1 subfamily.

The protein localises to the cytoplasm. The enzyme catalyses CMP + ATP = CDP + ADP. It carries out the reaction dCMP + ATP = dCDP + ADP. This Bartonella henselae (strain ATCC 49882 / DSM 28221 / CCUG 30454 / Houston 1) (Rochalimaea henselae) protein is Cytidylate kinase.